Here is a 1622-residue protein sequence, read N- to C-terminus: MNFSEEEEYSNRNAASSQKLGSLFKDNNAMSGNQSLQYTNNKTQSSANSNSPDVLISFPIHLYKFDNNKNEYVSSGSIATAIVGYKSSGKYQLLAYDNNKNYIVTVNITAQFNYSVTTIYGSFTDGNGQNWSMTFNSAEESTKYATHVAIAKCASGGYQQITFVDINNQSKTKPVANGDRVSIKYAGWLENNQRVGSLFDSNLQSETPFRFVVGEGKVIKGWDLGVIGMRKSAKRILVIPSELAYGKKGHSTIPPNTNLIFDLEVTGSKKKEGSEPSLPSLNGQPSNAPQQSLPTQLFDNSPVPQDDKANLLQRVAKLGRATGFTSPPPSDSENESNSRNSHSNNSHNNNNNNNSNSNNNSNSNSNNNNNNNNQNNNNNNNNQNNNQNNNNNNNYNNNNNNNNGYNNNNNNNGYNNNNNYNNNMNNNNGFNNGMNNGFGNNSMNGMNNGFNNGMNGMNNGMNGGFGMNGNMYTSSQSPQFNPMGTFGSAYNQQQALIGSGALVPIMPQHQQPSIIVASPPPPVQQAPPPTPAPAPPPPTPVIVQAPPAPVQSTTETIQILVEEKQFKKEIKHSIDQFNSKLDQVSSKFDSLAQPIVKGDVPISGVLLVQTLHRLVEDNEKLIKENVEKENRMVTLKENIATLHKKNEQFLEENTKMMESRNEAITDNVAQMRRQIIDLQKQKTLVEDDLADKQMLHTKSQSVINQLKRDYNTLQEELNSAKEENQKSIQDQEALKQAEKDYALKIRAFKKSLLDEKNARKSDIEKINSLEDELKDAQDSLTQAEKSNEESLKRLKLDMVRIKKRNDDKVSQLTLEITTLKDTLETERSALSSVQTLVENTRLETESKFNLLLIKKEEAIAAAELSLSEEQSKYNKLVQSNNQQIDQLQKLIDDAKKKLDHEKEEVIKSYKKGFAEGIESTKQENDLITTLQQQIQQLTTQYDDTKKSLIETKEKLSTLESQPPKTIVKEVIVKVPSDGTTVAVASSNNVDVAKEVKVCMQKVFVQVSESFDEDEEYSTDSIMSTFKDVIKRVTVEYIQEQKEKQQQQQEKEEEEVVEEEEKEEEEKEEEEKEEEEKEEEKEEEKEQEEEEEEKEVVVEEIVTIAEEVKEEEVVVEEPVTVVEEVKEEKPTPAIEEPVVAKSQTVVDPLSTKDDEDDDDDEDDYDDINEEDLKNIDAEIEKMQQEMGDELEDDDDEEEEKEKETAPVVTKSEVVDPLSSTKEESEEEEEEETKVEVPVLEEEKEEEETKVEVPVLEDEQEDKVESDVEEKIVEPPTLDEDDFEKVEVPVLGDDEQDEKVVEEPAPEEEEETKVEVPVLNKDDDEDNEKDVASDSEETPSTPPPIDDVEEEEEKEEKVVEQVKEEINETKFESSPFAVDEPTTTEEKEEEKEEEKVEEEEEKVVEPPTIDDDETTAPVIPSIDNSPRQTTTEEEESSTTAATTSTTTTSSTPVKPDEADTTKKTPKKTSFFDFDDSPFSAETETETKSTAASSDPFADTTSSTPTSTKKKDFFSTDDDSLFGNSSDIFDKPSTTTKKDPFDTDSTDDLFGSIKTNKESTSTASSTSNGGLFDSDSLFGGISVAKSNNNTPSRQKQDFSSLFGSDPTISPLTETEPEEKEIVLPL.

A PPIase FKBP-type domain is found at 178-269 (GDRVSIKYAG…IFDLEVTGSK (92 aa)). The segment at 268–306 (SKKKEGSEPSLPSLNGQPSNAPQQSLPTQLFDNSPVPQD) is disordered. The segment covering 277-303 (SLPSLNGQPSNAPQQSLPTQLFDNSPV) has biased composition (polar residues). Omega-N-methylarginine is present on arginine 314. Disordered stretches follow at residues 320 to 432 (RATG…GFNN) and 518 to 538 (SPPPPVQQAPPPTPAPAPPPP). A compositionally biased stretch (low complexity) spans 335–432 (ESNSRNSHSN…NMNNNNGFNN (98 aa)). 2 coiled-coil regions span residues 607–827 (LVQT…ETER) and 854–961 (KKEE…LESQ). Disordered stretches follow at residues 1043–1097 (KQQQ…EVVV) and 1122–1622 (EEVK…VLPL). 2 stretches are compositionally biased toward acidic residues: residues 1050 to 1093 (KEEE…EEEK) and 1152 to 1168 (DDEDDDDDEDDYDDINE). The span at 1169–1182 (EDLKNIDAEIEKMQ) shows a compositional bias: basic and acidic residues. Acidic residues-rich tracts occupy residues 1185 to 1199 (MGDELEDDDDEEEEK) and 1222 to 1260 (ESEEEEEEETKVEVPVLEEEKEEEETKVEVPVLEDEQED). Over residues 1261–1271 (KVESDVEEKIV) the composition is skewed to basic and acidic residues. The segment covering 1320 to 1335 (DDDEDNEKDVASDSEE) has biased composition (acidic residues). Residues 1353 to 1369 (EEKVVEQVKEEINETKF) show a composition bias toward basic and acidic residues. Acidic residues predominate over residues 1380–1412 (TTTEEKEEEKEEEKVEEEEEKVVEPPTIDDDET). Low complexity-rich tracts occupy residues 1435-1449 (STTAATTSTTTTSST) and 1465-1504 (KTSFFDFDDSPFSAETETETKSTAASSDPFADTTSSTPTS). Composition is skewed to polar residues over residues 1519 to 1532 (FGNSSDIFDKPSTT) and 1581 to 1609 (AKSNNNTPSRQKQDFSSLFGSDPTISPLT).

This sequence belongs to the FKBP-type PPIase family.

The enzyme catalyses [protein]-peptidylproline (omega=180) = [protein]-peptidylproline (omega=0). Inhibited by both FK506 and rapamycin. Its function is as follows. PPIases accelerate the folding of proteins by catalyzing the cis-trans isomerization of proline imidic peptide bonds in oligopeptides. In Dictyostelium discoideum (Social amoeba), this protein is FK506-binding protein 5 (fkbp5).